Consider the following 178-residue polypeptide: Large ribosomal subunit protein bL25 (178 aa).

Belongs to the bacterial ribosomal protein bL25 family. CTC subfamily. Part of the 50S ribosomal subunit; part of the 5S rRNA/L5/L18/L25 subcomplex. Contacts the 5S rRNA. Binds to the 5S rRNA independently of L5 and L18.

Its function is as follows. This is one of the proteins that binds to the 5S RNA in the ribosome where it forms part of the central protuberance. This chain is Large ribosomal subunit protein bL25, found in Helicobacter acinonychis (strain Sheeba).